Consider the following 78-residue polypeptide: Large ribosomal subunit protein bL28 (78 aa).

The segment at methionine 1–asparagine 22 is disordered. The span at arginine 11–asparagine 22 shows a compositional bias: polar residues.

The protein belongs to the bacterial ribosomal protein bL28 family.

This Alkalilimnicola ehrlichii (strain ATCC BAA-1101 / DSM 17681 / MLHE-1) protein is Large ribosomal subunit protein bL28.